A 416-amino-acid chain; its full sequence is Inhibitor of growth protein 3 (416 aa).

Disordered regions lie at residues 126 to 165 (LDTP…PEKK), 177 to 198 (SDAS…STNN), and 283 to 319 (QTLT…SSSL). Positions 136-152 (HHVHSHSSGEKRKHIPS) are enriched in basic residues. Residues 156–165 (STTDHVPEKK) are compositionally biased toward basic and acidic residues. A compositionally biased stretch (polar residues) spans 177–187 (SDASKENTAGC). 3 stretches are compositionally biased toward low complexity: residues 189-198 (TNLSSSSTNN), 283-293 (QTLTSSATTDS), and 302-319 (NNKS…SSSL). A PHD-type zinc finger spans residues 358 to 407 (PRYCICNQVSYGEMVGCDNQDCPIEWFHYGCVGLSEAPKGKWYCPQCTAA). Zn(2+) is bound by residues cysteine 361, cysteine 363, cysteine 374, cysteine 379, histidine 385, cysteine 388, cysteine 401, and cysteine 404.

It belongs to the ING family. In terms of assembly, interacts with H3K4me3 and to a lesser extent with H3K4me2. Component of the NuA4 histone acetyltransferase complex.

It is found in the nucleus. Its function is as follows. Component of the NuA4 histone acetyltransferase (HAT) complex which is involved in transcriptional activation of select genes principally by acetylation of nucleosomal histone H4 and H2A. This modification may both alter nucleosome - DNA interactions and promote interaction of the modified histones with other proteins which positively regulate transcription. NuA4 may also play a direct role in DNA repair when directly recruited to sites of DNA damage. In Xenopus laevis (African clawed frog), this protein is Inhibitor of growth protein 3 (ing3).